The following is a 482-amino-acid chain: tRNA sulfurtransferase (482 aa).

A THUMP domain is found at 61-165 (LTIRDALTRI…DDRLLLIKGR (105 aa)). ATP is bound by residues 183-184 (LI), K265, G287, and Q296. C344 and C456 are joined by a disulfide. One can recognise a Rhodanese domain in the interval 404-482 (FGPNDVILDI…GFKNVKVYRP (79 aa)). C456 functions as the Cysteine persulfide intermediate in the catalytic mechanism.

Belongs to the ThiI family. In terms of assembly, interacts with IscS.

The protein resides in the cytoplasm. It catalyses the reaction [ThiI sulfur-carrier protein]-S-sulfanyl-L-cysteine + a uridine in tRNA + 2 reduced [2Fe-2S]-[ferredoxin] + ATP + H(+) = [ThiI sulfur-carrier protein]-L-cysteine + a 4-thiouridine in tRNA + 2 oxidized [2Fe-2S]-[ferredoxin] + AMP + diphosphate. The catalysed reaction is [ThiS sulfur-carrier protein]-C-terminal Gly-Gly-AMP + S-sulfanyl-L-cysteinyl-[cysteine desulfurase] + AH2 = [ThiS sulfur-carrier protein]-C-terminal-Gly-aminoethanethioate + L-cysteinyl-[cysteine desulfurase] + A + AMP + 2 H(+). Its pathway is cofactor biosynthesis; thiamine diphosphate biosynthesis. Catalyzes the ATP-dependent transfer of a sulfur to tRNA to produce 4-thiouridine in position 8 of tRNAs, which functions as a near-UV photosensor. Also catalyzes the transfer of sulfur to the sulfur carrier protein ThiS, forming ThiS-thiocarboxylate. This is a step in the synthesis of thiazole, in the thiamine biosynthesis pathway. The sulfur is donated as persulfide by IscS. This Escherichia coli O157:H7 protein is tRNA sulfurtransferase.